A 214-amino-acid polypeptide reads, in one-letter code: External core antigen (214 aa).

The N-terminal stretch at 1-19 (MQLFHLCLIISCTCPTVQA) is a signal peptide. An HBEAG region spans residues 25–27 (GWL). The disordered stretch occupies residues 165 to 214 (NAPILSTLPETTVVRRRDRGRSPRRRTPSPRRRRSPSPRRRRSQSRESQC). Basic residues predominate over residues 178–207 (VRRRDRGRSPRRRTPSPRRRRSPSPRRRRS). A 1; half-length repeat occupies 186-192 (SPRRRTP). Residues 186-208 (SPRRRTPSPRRRRSPSPRRRRSQ) form a 3 X 8 AA repeats of S-P-R-R-R-R-S-[PQ] region. Residues 186–214 (SPRRRTPSPRRRRSPSPRRRRSQSRESQC) constitute a propeptide that is removed on maturation. Repeat copies occupy residues 193 to 200 (SPRRRRSP) and 201 to 208 (SPRRRRSQ).

The protein belongs to the orthohepadnavirus precore antigen family. Homodimerizes. Post-translationally, phosphorylated. In terms of processing, cleaved by host furin.

The protein localises to the secreted. It is found in the host nucleus. Functionally, may regulate immune response to the intracellular capsid in acting as a T-cell tolerogen, by having an immunoregulatory effect which prevents destruction of infected cells by cytotoxic T-cells. This immune regulation may predispose to chronicity during perinatal infections and prevent severe liver injury during adult infections. The sequence is that of External core antigen from Hepatitis B virus genotype A2 subtype adw2 (strain Rutter 1979) (HBV-A).